The following is a 69-amino-acid chain: DNA-directed RNA polymerase subunit omega (69 aa).

This sequence belongs to the RNA polymerase subunit omega family. In terms of assembly, the RNAP catalytic core consists of 2 alpha, 1 beta, 1 beta' and 1 omega subunit. When a sigma factor is associated with the core the holoenzyme is formed, which can initiate transcription.

It catalyses the reaction RNA(n) + a ribonucleoside 5'-triphosphate = RNA(n+1) + diphosphate. Promotes RNA polymerase assembly. Latches the N- and C-terminal regions of the beta' subunit thereby facilitating its interaction with the beta and alpha subunits. The polypeptide is DNA-directed RNA polymerase subunit omega (Pediococcus pentosaceus (strain ATCC 25745 / CCUG 21536 / LMG 10740 / 183-1w)).